We begin with the raw amino-acid sequence, 465 residues long: Ribulose bisphosphate carboxylase large chain (465 aa).

An N6,N6,N6-trimethyllysine modification is found at K4. Positions 113 and 163 each coordinate substrate. K165 functions as the Proton acceptor in the catalytic mechanism. Position 167 (K167) interacts with substrate. Residues K191, D193, and E194 each coordinate Mg(2+). K191 is subject to N6-carboxylysine. H284 functions as the Proton acceptor in the catalytic mechanism. The substrate site is built by R285, H317, and S369.

Belongs to the RuBisCO large chain family. Type I subfamily. Heterohexadecamer of 8 large chains and 8 small chains; disulfide-linked. The disulfide link is formed within the large subunit homodimers. Mg(2+) serves as cofactor. The disulfide bond which can form in the large chain dimeric partners within the hexadecamer appears to be associated with oxidative stress and protein turnover.

It localises to the plastid. It is found in the chloroplast. The enzyme catalyses 2 (2R)-3-phosphoglycerate + 2 H(+) = D-ribulose 1,5-bisphosphate + CO2 + H2O. It carries out the reaction D-ribulose 1,5-bisphosphate + O2 = 2-phosphoglycolate + (2R)-3-phosphoglycerate + 2 H(+). RuBisCO catalyzes two reactions: the carboxylation of D-ribulose 1,5-bisphosphate, the primary event in carbon dioxide fixation, as well as the oxidative fragmentation of the pentose substrate in the photorespiration process. Both reactions occur simultaneously and in competition at the same active site. The polypeptide is Ribulose bisphosphate carboxylase large chain (Casuarina equisetifolia (Beach she-oak)).